The sequence spans 403 residues: Formate-dependent phosphoribosylglycinamide formyltransferase (403 aa).

N(1)-(5-phospho-beta-D-ribosyl)glycinamide contacts are provided by residues 27-28 (EL) and glutamate 87. Residues arginine 120, lysine 161, 166–171 (SSGKGQ), 201–204 (EGFV), and glutamate 209 each bind ATP. One can recognise an ATP-grasp domain in the interval 125-319 (RLAAEELGLP…EFELHARAIL (195 aa)). Mg(2+)-binding residues include glutamate 278 and glutamate 290. N(1)-(5-phospho-beta-D-ribosyl)glycinamide contacts are provided by residues aspartate 297, lysine 366, and 373–374 (RR). Residues 382–403 (GPDVETARSRAREAASRVEPVA) are disordered. The span at 386–397 (ETARSRAREAAS) shows a compositional bias: basic and acidic residues.

The protein belongs to the PurK/PurT family. Homodimer.

The catalysed reaction is N(1)-(5-phospho-beta-D-ribosyl)glycinamide + formate + ATP = N(2)-formyl-N(1)-(5-phospho-beta-D-ribosyl)glycinamide + ADP + phosphate + H(+). It participates in purine metabolism; IMP biosynthesis via de novo pathway; N(2)-formyl-N(1)-(5-phospho-D-ribosyl)glycinamide from N(1)-(5-phospho-D-ribosyl)glycinamide (formate route): step 1/1. Involved in the de novo purine biosynthesis. Catalyzes the transfer of formate to 5-phospho-ribosyl-glycinamide (GAR), producing 5-phospho-ribosyl-N-formylglycinamide (FGAR). Formate is provided by PurU via hydrolysis of 10-formyl-tetrahydrofolate. The sequence is that of Formate-dependent phosphoribosylglycinamide formyltransferase from Rhodococcus jostii (strain RHA1).